The primary structure comprises 591 residues: L-fucose isomerase (591 aa).

Active-site proton acceptor residues include Glu337 and Asp361. Residues Glu337, Asp361, and His528 each contribute to the Mn(2+) site.

Belongs to the L-fucose isomerase family. In terms of assembly, homohexamer. Requires Mn(2+) as cofactor.

Its subcellular location is the cytoplasm. The catalysed reaction is L-fucose = L-fuculose. It functions in the pathway carbohydrate degradation; L-fucose degradation; L-lactaldehyde and glycerone phosphate from L-fucose: step 1/3. Its function is as follows. Converts the aldose L-fucose into the corresponding ketose L-fuculose. The protein is L-fucose isomerase of Salmonella paratyphi A (strain ATCC 9150 / SARB42).